A 254-amino-acid polypeptide reads, in one-letter code: Probable WRKY transcription factor 67 (254 aa).

A DNA-binding region (WRKY) is located at residues 102–170; it reads SRTMCPNDGF…YLGKHVCKAF (69 aa).

Belongs to the WRKY group III family.

The protein localises to the nucleus. Functionally, transcription factor. Interacts specifically with the W box (5'-(T)TGAC[CT]-3'), a frequently occurring elicitor-responsive cis-acting element. The polypeptide is Probable WRKY transcription factor 67 (WRKY67) (Arabidopsis thaliana (Mouse-ear cress)).